Consider the following 545-residue polypeptide: DNA mismatch repair protein MutL (545 aa).

The segment at 516–545 (GRRSGARGGGEARPRPQEESFPEAPLPREP) is disordered.

This sequence belongs to the DNA mismatch repair MutL/HexB family.

This protein is involved in the repair of mismatches in DNA. It is required for dam-dependent methyl-directed DNA mismatch repair. May act as a 'molecular matchmaker', a protein that promotes the formation of a stable complex between two or more DNA-binding proteins in an ATP-dependent manner without itself being part of a final effector complex. The polypeptide is DNA mismatch repair protein MutL (Thermus thermophilus (strain ATCC BAA-163 / DSM 7039 / HB27)).